The primary structure comprises 54 residues: ATP synthase F(0) complex subunit 8 (54 aa).

Residues 8-24 (PWFSIMLLTWFTFSLLI) traverse the membrane as a helical segment.

It belongs to the ATPase protein 8 family. In terms of assembly, component of the ATP synthase complex composed at least of ATP5F1A/subunit alpha, ATP5F1B/subunit beta, ATP5MC1/subunit c (homooctomer), MT-ATP6/subunit a, MT-ATP8/subunit 8, ATP5ME/subunit e, ATP5MF/subunit f, ATP5MG/subunit g, ATP5MK/subunit k, ATP5MJ/subunit j, ATP5F1C/subunit gamma, ATP5F1D/subunit delta, ATP5F1E/subunit epsilon, ATP5PF/subunit F6, ATP5PB/subunit b, ATP5PD/subunit d, ATP5PO/subunit OSCP. ATP synthase complex consists of a soluble F(1) head domain (subunits alpha(3) and beta(3)) - the catalytic core - and a membrane F(0) domain - the membrane proton channel (subunits c, a, 8, e, f, g, k and j). These two domains are linked by a central stalk (subunits gamma, delta, and epsilon) rotating inside the F1 region and a stationary peripheral stalk (subunits F6, b, d, and OSCP).

It localises to the mitochondrion membrane. Subunit 8, of the mitochondrial membrane ATP synthase complex (F(1)F(0) ATP synthase or Complex V) that produces ATP from ADP in the presence of a proton gradient across the membrane which is generated by electron transport complexes of the respiratory chain. ATP synthase complex consist of a soluble F(1) head domain - the catalytic core - and a membrane F(1) domain - the membrane proton channel. These two domains are linked by a central stalk rotating inside the F(1) region and a stationary peripheral stalk. During catalysis, ATP synthesis in the catalytic domain of F(1) is coupled via a rotary mechanism of the central stalk subunits to proton translocation. In vivo, can only synthesize ATP although its ATP hydrolase activity can be activated artificially in vitro. Part of the complex F(0) domain. This Gallus gallus (Chicken) protein is ATP synthase F(0) complex subunit 8.